The sequence spans 190 residues: Ribonuclease HII (190 aa).

Positions 1 to 190 (MAGVDEVGRG…FCRKIIENPD (190 aa)) constitute an RNase H type-2 domain. A divalent metal cation is bound by residues aspartate 5, glutamate 6, and aspartate 101.

This sequence belongs to the RNase HII family. It depends on Mn(2+) as a cofactor. Requires Mg(2+) as cofactor.

The protein localises to the cytoplasm. It carries out the reaction Endonucleolytic cleavage to 5'-phosphomonoester.. In terms of biological role, endonuclease that specifically degrades the RNA of RNA-DNA hybrids. The protein is Ribonuclease HII (rnhB) of Synechocystis sp. (strain ATCC 27184 / PCC 6803 / Kazusa).